Here is a 69-residue protein sequence, read N- to C-terminus: Small ribosomal subunit protein bS21 (69 aa).

It belongs to the bacterial ribosomal protein bS21 family.

The protein is Small ribosomal subunit protein bS21 of Borrelia duttonii (strain Ly).